The primary structure comprises 300 residues: Glycine--tRNA ligase alpha subunit (300 aa).

This sequence belongs to the class-II aminoacyl-tRNA synthetase family. Tetramer of two alpha and two beta subunits.

It is found in the cytoplasm. It catalyses the reaction tRNA(Gly) + glycine + ATP = glycyl-tRNA(Gly) + AMP + diphosphate. The protein is Glycine--tRNA ligase alpha subunit of Pseudoalteromonas translucida (strain TAC 125).